A 330-amino-acid chain; its full sequence is Malate dehydrogenase (330 aa).

Residue 12–18 (GAAGQIG) coordinates NAD(+). The substrate site is built by Arg93 and Arg99. Residues Asn106, Gln113, and 130 to 132 (VGN) contribute to the NAD(+) site. 2 residues coordinate substrate: Asn132 and Arg163. The active-site Proton acceptor is His188.

Belongs to the LDH/MDH superfamily. MDH type 2 family.

The enzyme catalyses (S)-malate + NAD(+) = oxaloacetate + NADH + H(+). In terms of biological role, catalyzes the reversible oxidation of malate to oxaloacetate. In Legionella pneumophila (strain Lens), this protein is Malate dehydrogenase.